The sequence spans 325 residues: Cytochrome c biogenesis protein CcsA (325 aa).

The next 8 helical transmembrane spans lie at 14–34 (TFAILLPTLLCYWTGVAFPNL), 36–56 (GLPAIGTAGMAIANLCMAALL), 68–88 (ISNLYESLFFLAWGLTAIHLL), 97–117 (LVGAATSPLALGIVAFAAFTL), 142–162 (VMMVSYAALLVGSLLSVAFLV), 233–253 (VIGLGFPLLTIGIIAGAVWAN), 260–280 (WSWDPKETWALITWLVFAAYL), and 294–314 (AILATVGFGVVWVCYLGVNLL).

The protein belongs to the CcmF/CycK/Ccl1/NrfE/CcsA family. As to quaternary structure, may interact with ccs1.

Its subcellular location is the cellular thylakoid membrane. Its function is as follows. Required during biogenesis of c-type cytochromes (cytochrome c6 and cytochrome f) at the step of heme attachment. The chain is Cytochrome c biogenesis protein CcsA from Synechococcus sp. (strain ATCC 27144 / PCC 6301 / SAUG 1402/1) (Anacystis nidulans).